We begin with the raw amino-acid sequence, 260 residues long: Snake venom serine protease homolog 2A (260 aa).

Residues 1–18 form the signal peptide; sequence MVLIRVLANLLILQLSYA. Residues 19–24 constitute a propeptide that is removed on maturation; sequence QKSSEL. Positions 25 to 251 constitute a Peptidase S1 domain; the sequence is IIGGDECNIN…HLDWIKSIIA (227 aa). Cystine bridges form between C31–C165, C52–C68, C100–C258, C144–C212, C176–C191, and C202–C227. Residues N83, N123, and N124 are each glycosylated (N-linked (GlcNAc...) asparagine).

Belongs to the peptidase S1 family. Snake venom subfamily. In terms of tissue distribution, expressed by the venom gland.

It is found in the secreted. In terms of biological role, snake venom serine protease homolog that may act in the hemostasis system of the prey. The protein is Snake venom serine protease homolog 2A (TLG2A) of Craspedocephalus gramineus (Bamboo pit viper).